Reading from the N-terminus, the 318-residue chain is MDLRAEQQQYNPYRIFSRSEWAKLRDDMPMTLAADEIAALRSMHDRLDLTEVEEIYLPLSRLLSIYVASMQRLFVAQRRFLGIQDRKVPYIIGVAGSVAVGKSTTARVLQALLARWSPGPKVDLITTDGFLFPNAVLERHGLMQKKGFPESYKLPMLLAFLSDIKAGRAPVRAPVYSHLTYDIVPKSWIEVSQPDILIVEGVNVLQTGRLPRDGRAVPVVSDFFDFSVYLDAEEPVLRDWYVKRFLALRDTAFHDPRSYFHRYALLSDDEATATAIAIWERTNRANLEDNILPTRPRATLILKKGADHVVEQVALRRL.

96–103 (GSVAVGKS) lines the ATP pocket.

Belongs to the prokaryotic pantothenate kinase family.

It localises to the cytoplasm. The enzyme catalyses (R)-pantothenate + ATP = (R)-4'-phosphopantothenate + ADP + H(+). Its pathway is cofactor biosynthesis; coenzyme A biosynthesis; CoA from (R)-pantothenate: step 1/5. The chain is Pantothenate kinase from Nitrobacter hamburgensis (strain DSM 10229 / NCIMB 13809 / X14).